Reading from the N-terminus, the 343-residue chain is NAD-dependent deacetylase sir2E (343 aa).

The 274-residue stretch at 27–300 (YLKNKKEFEF…PLLERQLLYE (274 aa)) folds into the Deacetylase sirtuin-type domain. Catalysis depends on His-152, which acts as the Proton acceptor. Cys-160, Cys-165, Cys-200, and Cys-203 together coordinate Zn(2+).

It belongs to the sirtuin family.

The protein resides in the nucleus. It catalyses the reaction N(6)-acetyl-L-lysyl-[protein] + NAD(+) + H2O = 2''-O-acetyl-ADP-D-ribose + nicotinamide + L-lysyl-[protein]. Functionally, NAD-dependent deacetylase, which plays an important role in the regulation of transcriptional repression. May play a role in cell cycle. When overexpressed, the cell cycle is accelerated. The polypeptide is NAD-dependent deacetylase sir2E (sir2E) (Dictyostelium discoideum (Social amoeba)).